Here is a 933-residue protein sequence, read N- to C-terminus: Progesterone receptor (933 aa).

An AF3; mediates transcriptional activation region spans residues 1–164 (MTELKAKGPR…PATQGVLSPL (164 aa)). Residues 1 to 256 (MTELKAKGPR…AAAGGGAAAV (256 aa)) are disordered. Residues 1–566 (MTELKAKGPR…YSFESLPQKI (566 aa)) are modulating, Pro-Rich. Ser-20 bears the Phosphoserine mark. Positions 55–59 (LDGLL) match the LXXL motif 1 motif. A Phosphoserine modification is found at Ser-81. An LXXL motif 2 motif is present at residues 115 to 119 (LDTLL). Ser-130 and Ser-162 each carry phosphoserine. The interval 165–305 (MSRSGCKAGD…LATTMMDFIH (141 aa)) is mediates transcriptional transrepression. The Nuclear localization signal signature appears at 183-187 (KVLPR). A phosphoserine mark is found at Ser-190 and Ser-213. Residues 220-231 (EVEEEDGSESEE) show a composition bias toward acidic residues. A compositionally biased stretch (low complexity) spans 232 to 246 (SAGPLLKGKPRALGG). Position 294 is a phosphoserine; by MAPK1 (Ser-294). The tract at residues 331-378 (GGAGAASAFAPPRSSPSASSTPVAVGDFPDCAYPPDAEPKDDAYPLYS) is disordered. Low complexity predominate over residues 335–350 (AASAFAPPRSSPSASS). A Phosphoserine; by MAPK modification is found at Ser-345. Residue Lys-388 forms a Glycyl lysine isopeptide (Lys-Gly) (interchain with G-Cter in SUMO); alternate linkage. A Glycyl lysine isopeptide (Lys-Gly) (interchain with G-Cter in ubiquitin); alternate cross-link involves residue Lys-388. Ser-400 is modified (phosphoserine; by CDK2). The interval 415–452 (PDFPLGPPPPLPPRAPPSRPGEAAVTAAPASASVSSAS) is disordered. The segment covering 418–433 (PLGPPPPLPPRAPPSR) has biased composition (pro residues). The segment covering 434–452 (PGEAAVTAAPASASVSSAS) has biased composition (low complexity). The interval 456–546 (STLECILYKA…VYPPYLNYLR (91 aa)) is AF1; mediates transcriptional activation. Residue Lys-531 forms a Glycyl lysine isopeptide (Lys-Gly) (interchain with G-Cter in SUMO) linkage. NR C4-type zinc fingers lie at residues 567 to 587 (CLIC…CGSC) and 603 to 627 (CAGR…LRKC). Positions 567 to 639 (CLICGDEASG…AGMVLGGRKF (73 aa)) form a DNA-binding region, nuclear receptor. Position 676 is a phosphoserine (Ser-676). One can recognise an NR LBD domain in the interval 679-913 (QDIQLIPPLI…EFPEMMSEVI (235 aa)). The segment at 687–933 (LINLLMSIEP…MVKPLLFHKK (247 aa)) is AF2; mediates transcriptional activation. A progesterone-binding site is contributed by Arg-766.

This sequence belongs to the nuclear hormone receptor family. Interacts with SMARD1 and UNC45A. Interacts with CUEDC2; the interaction promotes ubiquitination, decreases sumoylation, and represses transcriptional activity. Interacts with PIAS3; the interaction promotes sumoylation of PR in a hormone-dependent manner, inhibits DNA-binding, and alters nuclear export. Interacts with SP1; the interaction requires ligand-induced phosphorylation on Ser-345 by ERK1/2-MAPK. Interacts with PRMT2. Interacts with NCOA2 and NCOA1. Interacts with KLF9. Interacts with GTF2B. In terms of processing, phosphorylated on multiple serine sites. Several of these sites are hormone-dependent. Phosphorylation on Ser-294 is highly hormone-dependent and modulates ubiquitination and sumoylation on Lys-388. Phosphorylation on Ser-102 and Ser-345 also requires induction by hormone. Basal phosphorylation on Ser-81, Ser-162, Ser-190 and Ser-400 is increased in response to progesterone and can be phosphorylated in vitro by the CDK2-A1 complex. Increased levels of phosphorylation on Ser-400 also in the presence of EGF, heregulin, IGF, PMA and FBS. Phosphorylation at this site by CDK2 is ligand-independent, and increases nuclear translocation and transcriptional activity. Phosphorylation at Ser-162 and Ser-294, but not at Ser-190, is impaired during the G(2)/M phase of the cell cycle. Phosphorylation on Ser-345 by ERK1/2 MAPK is required for interaction with SP1. Sumoylation is hormone-dependent and represses transcriptional activity. Sumoylation on all three sites is enhanced by PIAS3. Desumoylated by SENP1. Sumoylation on Lys-388, the main site of sumoylation, is repressed by ubiquitination on the same site, and modulated by phosphorylation at Ser-294. Post-translationally, ubiquitination is hormone-dependent and represses sumoylation on the same site. Promoted by MAPK-mediated phosphorylation on Ser-294. Ubiquitinated by UBR5, leading to its degradation: UBR5 specifically recognizes and binds ligand-bound PGR when it is not associated with coactivators (NCOAs). In presence of NCOAs, the UBR5-degron is not accessible, preventing its ubiquitination and degradation. In terms of processing, palmitoylated by ZDHHC7 and ZDHHC21. Palmitoylation is required for plasma membrane targeting and for rapid intracellular signaling via ERK and AKT kinases and cAMP generation.

Its subcellular location is the nucleus. It localises to the cytoplasm. Functionally, the steroid hormones and their receptors are involved in the regulation of eukaryotic gene expression and affect cellular proliferation and differentiation in target tissues. Transcriptional activator of several progesteron-dependent promoters in a variety of cell types. Involved in activation of SRC-dependent MAPK signaling on hormone stimulation. This is Progesterone receptor (PGR) from Pan paniscus (Pygmy chimpanzee).